The following is a 70-amino-acid chain: Large ribosomal subunit protein bL31 (70 aa).

Residues C16, C18, C37, and C40 each contribute to the Zn(2+) site.

The protein belongs to the bacterial ribosomal protein bL31 family. Type A subfamily. In terms of assembly, part of the 50S ribosomal subunit. The cofactor is Zn(2+).

Functionally, binds the 23S rRNA. This chain is Large ribosomal subunit protein bL31, found in Cronobacter sakazakii (strain ATCC BAA-894) (Enterobacter sakazakii).